Here is a 102-residue protein sequence, read N- to C-terminus: Large ribosomal subunit protein uL24 (102 aa).

This sequence belongs to the universal ribosomal protein uL24 family. As to quaternary structure, part of the 50S ribosomal subunit.

Its function is as follows. One of two assembly initiator proteins, it binds directly to the 5'-end of the 23S rRNA, where it nucleates assembly of the 50S subunit. In terms of biological role, one of the proteins that surrounds the polypeptide exit tunnel on the outside of the subunit. This Rhizobium rhizogenes (strain K84 / ATCC BAA-868) (Agrobacterium radiobacter) protein is Large ribosomal subunit protein uL24.